A 302-amino-acid chain; its full sequence is Sulfate adenylyltransferase subunit 2 (302 aa).

The interval 280–302 (RQGRLIDSDQSASMEQKKRQGYF) is disordered.

Belongs to the PAPS reductase family. CysD subfamily. In terms of assembly, heterodimer composed of CysD, the smaller subunit, and CysN.

It carries out the reaction sulfate + ATP + H(+) = adenosine 5'-phosphosulfate + diphosphate. It participates in sulfur metabolism; hydrogen sulfide biosynthesis; sulfite from sulfate: step 1/3. Its function is as follows. With CysN forms the ATP sulfurylase (ATPS) that catalyzes the adenylation of sulfate producing adenosine 5'-phosphosulfate (APS) and diphosphate, the first enzymatic step in sulfur assimilation pathway. APS synthesis involves the formation of a high-energy phosphoric-sulfuric acid anhydride bond driven by GTP hydrolysis by CysN coupled to ATP hydrolysis by CysD. The sequence is that of Sulfate adenylyltransferase subunit 2 from Shewanella frigidimarina (strain NCIMB 400).